Reading from the N-terminus, the 469-residue chain is MLSLSHPHPHPASTTAAAAARHHHRRNAPFAPHHRRRRRFAHLTTSAVILGPDGRPIGGGPRDNKLPFTPPPTAPPDQLYQPFHPPPSPLPDKYKDLDLGQRLAVLRDRLGLWHEYAPLISALSREGFTPSSIEEATGISGVEQNSVVVATQVRDSLVADEGGFPAELLRYFDSYGGPELLYELRFLNARQRADAARHAIDRRLEPRGVRELARSMKDFPQRRGDDGWEAFTRDNPGDCLAFARFRQSREAIDAEDSVAELERALEVVDTEPARARVEAELDRARRKAAGEEVDDEDGAANAAAAASRPAVPVVRLMYGEVAEATTVLLLPVVREGDGGEALAHAPRRTRTDADLGMVEVDKGWTRWAVVPGWGPVAEVAGEAVVIELADGRTLPWRSAEAERVLVVANRGRREVVEDGIYVVEREGRLVVEKGRKLAAEGVGEAAAEVLVVVRPPRDEDDMISDDEWD.

The transit peptide at 1–46 directs the protein to the chloroplast; sequence MLSLSHPHPHPASTTAAAAARHHHRRNAPFAPHHRRRRRFAHLTTS. The segment at 1 to 78 is disordered; the sequence is MLSLSHPHPH…TPPPTAPPDQ (78 aa). Residues 20-41 are compositionally biased toward basic residues; it reads ARHHHRRNAPFAPHHRRRRRFA. Positions 90 to 281 are N-terminal alpha-helix; sequence LPDKYKDLDL…PARARVEAEL (192 aa). The stretch at 246–294 forms a coiled coil; sequence RQSREAIDAEDSVAELERALEVVDTEPARARVEAELDRARRKAAGEEVD. Positions 311–456 are C-terminal beta sheet; it reads VPVVRLMYGE…AEVLVVVRPP (146 aa).

The protein belongs to the RAF family.

It localises to the plastid. The protein localises to the chloroplast. In terms of biological role, required for assembly or stability of RuBisCO. Acts at a postchaperonin step to fold and/or assemble the large subunit (LS) into RuBisCO. This is Rubisco accumulation factor 1, chloroplastic (RAF1) from Oryza sativa subsp. japonica (Rice).